Reading from the N-terminus, the 154-residue chain is Myoglobin (154 aa).

In terms of domain architecture, Globin spans 2-148 (GLSDGEWQLV…FRKDMASNYK (147 aa)). Serine 4 carries the post-translational modification Phosphoserine. Histidine 65 is a binding site for nitrite. Position 65 (histidine 65) interacts with O2. Residue threonine 68 is modified to Phosphothreonine. Histidine 94 lines the heme b pocket.

It belongs to the globin family. In terms of assembly, monomeric.

It is found in the cytoplasm. The protein localises to the sarcoplasm. The catalysed reaction is Fe(III)-heme b-[protein] + nitric oxide + H2O = Fe(II)-heme b-[protein] + nitrite + 2 H(+). It carries out the reaction H2O2 + AH2 = A + 2 H2O. Its function is as follows. Monomeric heme protein which primary function is to store oxygen and facilitate its diffusion within muscle tissues. Reversibly binds oxygen through a pentacoordinated heme iron and enables its timely and efficient release as needed during periods of heightened demand. Depending on the oxidative conditions of tissues and cells, and in addition to its ability to bind oxygen, it also has a nitrite reductase activity whereby it regulates the production of bioactive nitric oxide. Under stress conditions, like hypoxia and anoxia, it also protects cells against reactive oxygen species thanks to its pseudoperoxidase activity. The sequence is that of Myoglobin (MB) from Pan troglodytes (Chimpanzee).